Consider the following 29-residue polypeptide: Probable small toxic protein BsrH (29 aa).

The helical transmembrane segment at 6 to 26 threads the bilayer; it reads FQALMLMLAFGSFIIALLTYI.

The protein localises to the cell membrane. Functionally, possible toxic component of a type I toxin-antitoxin (TA) system; an overlapping antisense RNA has been identified. This Bacillus subtilis (strain 168) protein is Probable small toxic protein BsrH.